A 617-amino-acid chain; its full sequence is MPQYRSRTSTHGRNMAGARGLWRATGMKDGDFGKPIIAVVNSFTQFVPGHVHLKDLGQLVAREIEKAGGVAKEFNTIAVDDGIAMGHDGMLYSLPSREIIADSVEYMVNAHCADAMVCISNCDKITPGMLMAAMRLNIPAVFVSGGPMEAGKVLLSTGEKKVDLIDAMIAAADDKVTDADVQVMERSACPTCGSCSGMFTANSMNCLTEALGLALPGNGSTLATHADRERLFVEAGHLIVDLARRYYEQDDASVLPRSVASFKAFENAMTLDISMGGSTNTVLHLLAAANEGEVPFTMADIDRLSRRVPVLCKVAPAVANIHMEDVHRAGGIMAILGELDRGGLIHTDLPTVHAATMADALDRWDVKRTKSESVATFFRAAPGGVPTQVAFSQSRRWDDLDLDRETGVIRDVAHAYSKDGGLAVLYGNIALDGCIVKTAGVDASILKFTGKARIFESQDAAVEAILSTGRIQAGDVVLIRYEGPRGGPGMQEMLYPTSYLKSKGLGKACALVTDGRFSGGSSGLSIGHVSPEAAEGGAIGLVEEGDTIEIDIPNRIIRVAVSDEVLSQRRAAMEAKGDAAWKPADRKRVVSQALQAYAALTTSAARGAVRDVSRLRR.

Residue aspartate 81 participates in Mg(2+) binding. Cysteine 122 provides a ligand contact to [2Fe-2S] cluster. Residues aspartate 123 and lysine 124 each contribute to the Mg(2+) site. Residue lysine 124 is modified to N6-carboxylysine. Cysteine 195 is a binding site for [2Fe-2S] cluster. Residue glutamate 492 coordinates Mg(2+). Residue serine 518 is the Proton acceptor of the active site.

The protein belongs to the IlvD/Edd family. Homodimer. The cofactor is [2Fe-2S] cluster. Requires Mg(2+) as cofactor.

The catalysed reaction is (2R)-2,3-dihydroxy-3-methylbutanoate = 3-methyl-2-oxobutanoate + H2O. The enzyme catalyses (2R,3R)-2,3-dihydroxy-3-methylpentanoate = (S)-3-methyl-2-oxopentanoate + H2O. It participates in amino-acid biosynthesis; L-isoleucine biosynthesis; L-isoleucine from 2-oxobutanoate: step 3/4. Its pathway is amino-acid biosynthesis; L-valine biosynthesis; L-valine from pyruvate: step 3/4. Its function is as follows. Functions in the biosynthesis of branched-chain amino acids. Catalyzes the dehydration of (2R,3R)-2,3-dihydroxy-3-methylpentanoate (2,3-dihydroxy-3-methylvalerate) into 2-oxo-3-methylpentanoate (2-oxo-3-methylvalerate) and of (2R)-2,3-dihydroxy-3-methylbutanoate (2,3-dihydroxyisovalerate) into 2-oxo-3-methylbutanoate (2-oxoisovalerate), the penultimate precursor to L-isoleucine and L-valine, respectively. The polypeptide is Dihydroxy-acid dehydratase (Xanthobacter autotrophicus (strain ATCC BAA-1158 / Py2)).